The following is a 291-amino-acid chain: Verruculogen synthase (291 aa).

Y68 is an active-site residue.

This sequence belongs to the PhyH family. As to quaternary structure, homodimer. Requires Fe cation as cofactor.

The catalysed reaction is fumitremorgin B + 2-oxoglutarate + AH2 + 2 O2 = verruculogen + succinate + A + CO2 + H2O. Its pathway is mycotoxin biosynthesis. Verruculogen synthase; part of the gene cluster that mediates the biosynthesis of fumitremorgins, indole alkaloids that carry not only intriguing chemical structures, but also interesting biological and pharmacological activities. The biosynthesis of fumitremorgin-type alkaloids begins by condensation of the two amino acids L-tryptophan and L-proline to brevianamide F, catalyzed by the non-ribosomal peptide synthetase ftmA. Brevianamide F is then prenylated by the prenyltransferase ftmPT1/ftmB in the presence of dimethylallyl diphosphate, resulting in the formation of tryprostatin B. The three cytochrome P450 monooxygenases, ftmP450-1/ftmC, ftmP450-2/ftmE and ftmP450-3/FtmG, are responsible for the conversion of tryprostatin B to 6-hydroxytryprostatin B, tryprostatin A to fumitremorgin C and fumitremorgin C to 12,13-dihydroxyfumitremorgin C, respectively. The putative methyltransferase ftmMT/ftmD is expected for the conversion of 6-hydroxytryprostatin B to tryprostatin A. FtmPT2/FtmH catalyzes the prenylation of 12,13-dihydroxyfumitre-morgin C in the presence of dimethylallyl diphosphate, resulting in the formation of fumitremorgin B. Fumitremorgin B is further converted to verruculogen by ftmOx1/ftmF via the insertion of an endoperoxide bond between the two prenyl moieties. In some fungal species, verruculogen is further converted to fumitremorgin A, but the enzymes involved in this step have not been identified yet. This is Verruculogen synthase from Aspergillus fumigatus (strain ATCC MYA-4609 / CBS 101355 / FGSC A1100 / Af293) (Neosartorya fumigata).